A 415-amino-acid chain; its full sequence is Carbamoyl phosphate synthase arginine-specific small chain (415 aa).

The transit peptide at 1–17 (MLRFLKPFPLRFGKRFY) directs the protein to the mitochondrion. Positions 88, 272, and 274 each coordinate L-glutamine. Residues 225–412 (NIAVIDCGVK…IKEAIKYQKS (188 aa)) enclose the Glutamine amidotransferase type-1 domain. Residue cysteine 301 is the Nucleophile of the active site. Residues methionine 302, glutamine 305, asparagine 343, glycine 345, and tyrosine 346 each coordinate L-glutamine. Active-site residues include histidine 385 and glutamate 387.

This sequence belongs to the CarA family. In terms of assembly, heterodimer composed of 2 chains; the small (or glutamine) chain promotes the hydrolysis of glutamine to ammonia, which is used by the large (or ammonia) chain to synthesize carbamoyl phosphate.

Its subcellular location is the mitochondrion. It is found in the cytoplasm. It carries out the reaction hydrogencarbonate + L-glutamine + 2 ATP + H2O = carbamoyl phosphate + L-glutamate + 2 ADP + phosphate + 2 H(+). It catalyses the reaction L-glutamine + H2O = L-glutamate + NH4(+). It functions in the pathway amino-acid biosynthesis; L-arginine biosynthesis; carbamoyl phosphate from bicarbonate: step 1/1. Small subunit of the arginine-specific carbamoyl phosphate synthase (CPSase). CPSase catalyzes the formation of carbamoyl phosphate from the ammonia moiety of glutamine, carbonate, and phosphate donated by ATP, the first step of the arginine biosynthetic pathway. The small subunit (glutamine amidotransferase) binds and cleaves glutamine to supply the large subunit with the substrate ammonia. The sequence is that of Carbamoyl phosphate synthase arginine-specific small chain (arg5) from Schizosaccharomyces pombe (strain 972 / ATCC 24843) (Fission yeast).